The following is a 258-amino-acid chain: Acyl-[acyl-carrier-protein]--UDP-N-acetylglucosamine O-acyltransferase (258 aa).

This sequence belongs to the transferase hexapeptide repeat family. LpxA subfamily. As to quaternary structure, homotrimer.

It localises to the cytoplasm. The enzyme catalyses a (3R)-hydroxyacyl-[ACP] + UDP-N-acetyl-alpha-D-glucosamine = a UDP-3-O-[(3R)-3-hydroxyacyl]-N-acetyl-alpha-D-glucosamine + holo-[ACP]. It participates in glycolipid biosynthesis; lipid IV(A) biosynthesis; lipid IV(A) from (3R)-3-hydroxytetradecanoyl-[acyl-carrier-protein] and UDP-N-acetyl-alpha-D-glucosamine: step 1/6. Involved in the biosynthesis of lipid A, a phosphorylated glycolipid that anchors the lipopolysaccharide to the outer membrane of the cell. In Stutzerimonas stutzeri (strain A1501) (Pseudomonas stutzeri), this protein is Acyl-[acyl-carrier-protein]--UDP-N-acetylglucosamine O-acyltransferase.